We begin with the raw amino-acid sequence, 336 residues long: Potassium channel subfamily K member 1 (336 aa).

Residues 1–20 are Cytoplasmic-facing; sequence MLQSLAGSSCVRLVERHRSA. The chain crosses the membrane as a helical span at residues 21–41; that stretch reads WCFGFLVLGYLLYLVFGAVVF. At 42-103 the chain is on the extracellular side; it reads SSVELPYEDL…SNASGNWNWD (62 aa). N-linked (GlcNAc...) asparagine glycosylation is present at N95. Positions 104 to 116 form an intramembrane region, helical; it reads FTSALFFASTVLS. An intramembrane segment occupies 117–122; sequence TTGYGH. The selectivity filter 1 stretch occupies residues 117–122; the sequence is TTGYGH. Over 123–132 the chain is Extracellular; the sequence is TVPLSDGGKA. The helical transmembrane segment at 133-156 threads the bilayer; sequence FCIIYSVIGIPFTLLFLTAVVQRI. Residues 157–181 are Cytoplasmic-facing; the sequence is TVHVTRRPVLYFHIRWGFSKQVVAI. Residues 182–202 form a helical membrane-spanning segment; it reads VHAVLLGFVTVSCFFFIPAAV. At 203–211 the chain is on the extracellular side; it reads FSVLEDDWN. The segment at residues 212 to 224 is an intramembrane region (helical); the sequence is FLESFYFCFISLS. Residues 225-230 are selectivity filter 2; it reads TIGLGD. The stretch at 225-231 is an intramembrane region; sequence TIGLGDY. Over 232–243 the chain is Extracellular; that stretch reads VPGEGYNQKFRE. The helical transmembrane segment at 244 to 267 threads the bilayer; it reads LYKIGITCYLLLGLIAMLVVLETF. Residues 268 to 336 lie on the Cytoplasmic side of the membrane; sequence CELHELKKFR…SACVDGPANH (69 aa). Residue K274 forms a Glycyl lysine isopeptide (Lys-Gly) (interchain with G-Cter in SUMO) linkage. Residues 293–299 are important for intracellular retention in recycling endosomes; that stretch reads IIEHDQL. S326 is modified (phosphoserine).

The protein belongs to the two pore domain potassium channel (TC 1.A.1.8) family. In terms of assembly, homodimer; disulfide-linked. Heterodimer with KCNK2; disulfide-linked. In astrocytes, forms mostly heterodimeric potassium channels with KCNK2, with only a minor proportion of functional channels containing homodimeric KCNK1. Interacts with KCNK3 and KCNK9, forming functional heterodimeric channels. Interacts with GNG4. Identified in a complex with PSD and ARF6; interacts only with PSD that is bound to ARF6. Interacts with UBE2I. In terms of processing, sumoylation is controversial. Sumoylated by UBE2I. Not sumoylated when expressed in xenopus oocytes or mammalian cells. Sumoylation inactivates the channel, but does not interfere with expression at the cell membrane. Sumoylation of a single subunit is sufficient to silence the dimeric channel. Sumoylation of KCNK1 is sufficient to silence heterodimeric channels formed by KCNK1 and KCNK3 or KCNK9. Desumoylated by SENP1; this activates the channel. Desumoylated by SENP1; this strongly increases halothane-mediated activation of heterodimeric channels formed with KCNK9. SENP1 treatment has no effect. As to expression, detected in bronchial epithelial cells. Detected in heart left atrium and left ventricle. Detected in cardiac myocytes (at protein level). Widely expressed with high levels in heart, brain and kidney, and lower levels in colon, ovary, placenta, lung and liver. Highly expressed in cerebellum, and detected at lower levels in amygdala, caudate nucleus, brain cortex, hippocampus, putamen, substantia nigra, thalamus, dorsal root ganglion, spinal cord, pituitary, heart, kidney, lung, placenta, pancreas, stomach, small intestine, uterus and prostate. Detected in right and left heart ventricle and atrium, and in heart Purkinje fibers.

It is found in the cell membrane. The protein resides in the recycling endosome. The protein localises to the synaptic cell membrane. It localises to the cytoplasmic vesicle. Its subcellular location is the perikaryon. It is found in the cell projection. The protein resides in the dendrite. The protein localises to the apical cell membrane. The catalysed reaction is K(+)(in) = K(+)(out). It catalyses the reaction NH4(+)(in) = NH4(+)(out). The enzyme catalyses Na(+)(in) = Na(+)(out). It carries out the reaction Rb(+)(in) = Rb(+)(out). The catalysed reaction is Cs(+)(in) = Cs(+)(out). It catalyses the reaction Li(+)(in) = Li(+)(out). The enzyme catalyses L-glutamate(out) = L-glutamate(in). It carries out the reaction chloride(in) = chloride(out). With respect to regulation, inhibited by Ba(2+) ions and quinidine. Inhibited by quinine. Is slightly inhibited by 10 mM tetraethylammonium (TEA), and only marginally inhibited by 4-aminopyridine, charybdotoxin and dendrotoxin. Lowering the extracellular pH to below 6.5 transiently activates the channel, and then inhibits channel activity. Inhibited when the intracellular pH is decreased down to pH 6.0, but this may be due to indirect effects. Its function is as follows. Ion channel that contributes to passive transmembrane potassium transport and to the regulation of the resting membrane potential in brain astrocytes, but also in kidney and in other tissues. Forms dimeric channels through which potassium ions pass in accordance with their electrochemical gradient. The channel is selective for K(+) ions at physiological potassium concentrations and at neutral pH, but becomes permeable to Na(+) at subphysiological K(+) levels and upon acidification of the extracellular medium. The homodimer has very low potassium channel activity, when expressed in heterologous systems, and can function as weakly inward rectifying potassium channel. Channel activity is modulated by activation of serotonin receptors. Heterodimeric channels containing KCNK1 and KCNK2 have much higher activity, and may represent the predominant form in astrocytes. Heterodimeric channels containing KCNK1 and KCNK3 or KCNK9 have much higher activity. Heterodimeric channels formed by KCNK1 and KCNK9 may contribute to halothane-sensitive currents. Mediates outward rectifying potassium currents in dentate gyrus granule cells and contributes to the regulation of their resting membrane potential. Contributes to the regulation of action potential firing in dentate gyrus granule cells and down-regulates their intrinsic excitability. In astrocytes, the heterodimer formed by KCNK1 and KCNK2 is required for rapid glutamate release in response to activation of G-protein coupled receptors, such as F2R and CNR1. Required for normal ion and water transport in the kidney. Contributes to the regulation of the resting membrane potential of pancreatic beta cells. The low channel activity of homodimeric KCNK1 may be due to sumoylation. The low channel activity may be due to rapid internalization from the cell membrane and retention in recycling endosomes. Permeable to monovalent cations with ion selectivity for K(+) &gt; Rb(+) &gt;&gt; NH4(+) &gt;&gt; Cs(+) = Na(+) = Li(+). The polypeptide is Potassium channel subfamily K member 1 (KCNK1) (Homo sapiens (Human)).